Here is a 265-residue protein sequence, read N- to C-terminus: Phosphatidylserine decarboxylase proenzyme (265 aa).

The active-site Schiff-base intermediate with substrate; via pyruvic acid is the S183. S183 is subject to Pyruvic acid (Ser); by autocatalysis. The segment at 218 to 242 is disordered; it reads PQIESEPESEPALQTAPVETAANPS.

This sequence belongs to the phosphatidylserine decarboxylase family. PSD-A subfamily. Heterodimer of a large membrane-associated beta subunit and a small pyruvoyl-containing alpha subunit. Requires pyruvate as cofactor. Is synthesized initially as an inactive proenzyme. Formation of the active enzyme involves a self-maturation process in which the active site pyruvoyl group is generated from an internal serine residue via an autocatalytic post-translational modification. Two non-identical subunits are generated from the proenzyme in this reaction, and the pyruvate is formed at the N-terminus of the alpha chain, which is derived from the carboxyl end of the proenzyme. The post-translation cleavage follows an unusual pathway, termed non-hydrolytic serinolysis, in which the side chain hydroxyl group of the serine supplies its oxygen atom to form the C-terminus of the beta chain, while the remainder of the serine residue undergoes an oxidative deamination to produce ammonia and the pyruvoyl prosthetic group on the alpha chain.

The protein localises to the cell membrane. The catalysed reaction is a 1,2-diacyl-sn-glycero-3-phospho-L-serine + H(+) = a 1,2-diacyl-sn-glycero-3-phosphoethanolamine + CO2. The protein operates within phospholipid metabolism; phosphatidylethanolamine biosynthesis; phosphatidylethanolamine from CDP-diacylglycerol: step 2/2. Functionally, catalyzes the formation of phosphatidylethanolamine (PtdEtn) from phosphatidylserine (PtdSer). The sequence is that of Phosphatidylserine decarboxylase proenzyme from Neisseria meningitidis serogroup C (strain 053442).